Here is a 242-residue protein sequence, read N- to C-terminus: Argininosuccinate synthase (242 aa).

It belongs to the argininosuccinate synthase family. Type 2 subfamily. As to quaternary structure, homotetramer.

The protein resides in the cytoplasm. It catalyses the reaction L-citrulline + L-aspartate + ATP = 2-(N(omega)-L-arginino)succinate + AMP + diphosphate + H(+). The protein operates within amino-acid biosynthesis; L-arginine biosynthesis; L-arginine from L-ornithine and carbamoyl phosphate: step 2/3. This chain is Argininosuccinate synthase (argG), found in Dickeya chrysanthemi (Pectobacterium chrysanthemi).